A 249-amino-acid polypeptide reads, in one-letter code: Adenylate kinase (249 aa).

43-48 (GAGKGT) contacts ATP. The tract at residues 63 to 92 (ATGDMLRAQVAAKTALGVEAKKIMDQGGLV) is NMP. Residues threonine 64, arginine 69, 90–92 (GLV), 119–122 (GFPR), and glutamine 126 each bind AMP. Residues 160–197 (GRLVHPASGRSYHKLFNPPKKDMTDDVTGEPLVQRSDD) form an LID region. ATP-binding positions include arginine 161 and 170–171 (SY). The segment at 177–197 (PPKKDMTDDVTGEPLVQRSDD) is disordered. Residues arginine 194 and arginine 205 each contribute to the AMP site. ATP is bound at residue glutamine 233.

The protein belongs to the adenylate kinase family. AK2 subfamily. As to quaternary structure, monomer.

It is found in the cytoplasm. The protein localises to the cytosol. Its subcellular location is the mitochondrion intermembrane space. It carries out the reaction AMP + ATP = 2 ADP. Its function is as follows. Catalyzes the reversible transfer of the terminal phosphate group between ATP and AMP. Plays an important role in cellular energy homeostasis and in adenine nucleotide metabolism. Adenylate kinase activity is critical for regulation of the phosphate utilization and the AMP de novo biosynthesis pathways. The protein is Adenylate kinase of Candida albicans (strain SC5314 / ATCC MYA-2876) (Yeast).